The following is a 638-amino-acid chain: Nitrous-oxide reductase (638 aa).

Residues 1–52 (MSDKDSKNTPQVPEKLGLSRRGFLGASAVTGAAVAATALGGAVMTRESWAQA) constitute a signal peptide (tat-type signal). Positions 129, 130, and 178 each coordinate Cu cation. Positions 256, 259, 267, 273, and 324 each coordinate Ca(2+). Positions 326, 382, and 433 each coordinate Cu cation. The Ca(2+) site is built by lysine 454 and glutamate 469. Histidine 494, histidine 583, cysteine 618, tryptophan 620, cysteine 622, histidine 626, and methionine 629 together coordinate Cu cation. Residues 542–638 (NKVRVYMTSM…MVGRMMVEPA (97 aa)) form a COX2-like region.

Belongs to the NosZ family. The protein in the C-terminal section; belongs to the cytochrome c oxidase subunit 2 family. Homodimer. Requires Ca(2+) as cofactor. It depends on Cu cation as a cofactor. In terms of processing, predicted to be exported by the Tat system. The position of the signal peptide cleavage has not been experimentally proven. Post-translationally, the N-terminus is blocked.

It localises to the periplasm. It catalyses the reaction N2 + 2 Fe(III)-[cytochrome c] + H2O = nitrous oxide + 2 Fe(II)-[cytochrome c] + 2 H(+). It participates in nitrogen metabolism; nitrate reduction (denitrification); dinitrogen from nitrate: step 4/4. Functionally, nitrous-oxide reductase is part of a bacterial respiratory system which is activated under anaerobic conditions in the presence of nitrate or nitrous oxide. This Stutzerimonas stutzeri (Pseudomonas stutzeri) protein is Nitrous-oxide reductase (nosZ).